A 354-amino-acid chain; its full sequence is Ornithine carbamoyltransferase, catabolic (354 aa).

Carbamoyl phosphate is bound by residues 67–70 (STRT), Q94, R118, and 145–148 (HPTQ). L-ornithine contacts are provided by residues N177, D241, and 245–246 (SM). Carbamoyl phosphate-binding positions include 284–285 (CL) and R329.

This sequence belongs to the aspartate/ornithine carbamoyltransferase superfamily. OTCase family.

It localises to the cytoplasm. It catalyses the reaction carbamoyl phosphate + L-ornithine = L-citrulline + phosphate + H(+). The protein operates within amino-acid degradation; L-arginine degradation via ADI pathway; carbamoyl phosphate from L-arginine: step 2/2. Its function is as follows. Reversibly catalyzes the transfer of the carbamoyl group from carbamoyl phosphate (CP) to the N(epsilon) atom of ornithine (ORN) to produce L-citrulline. This chain is Ornithine carbamoyltransferase, catabolic (arcB), found in Lactococcus lactis subsp. cremoris (Streptococcus cremoris).